Reading from the N-terminus, the 425-residue chain is L-cysteine:1D-myo-inositol 2-amino-2-deoxy-alpha-D-glucopyranoside ligase (425 aa).

Cysteine 43 provides a ligand contact to Zn(2+). Residues 43-46, serine 58, and 81-83 contribute to the L-cysteinyl-5'-AMP site; these read CGIT and NVT. The short motif at 45 to 55 is the 'HIGH' region element; that stretch reads ITPYDATHMGH. A 'ERGGDP' region motif is present at residues 199-204; sequence ERGGDP. Tryptophan 240 is a binding site for L-cysteinyl-5'-AMP. Cysteine 244 lines the Zn(2+) pocket. Residue 262–264 participates in L-cysteinyl-5'-AMP binding; that stretch reads GSD. Zn(2+) is bound at residue histidine 269. Valine 295 contributes to the L-cysteinyl-5'-AMP binding site. The 'KMSKS' region motif lies at 301–305; it reads KMSKS.

Belongs to the class-I aminoacyl-tRNA synthetase family. MshC subfamily. Monomer. Zn(2+) is required as a cofactor.

It carries out the reaction 1D-myo-inositol 2-amino-2-deoxy-alpha-D-glucopyranoside + L-cysteine + ATP = 1D-myo-inositol 2-(L-cysteinylamino)-2-deoxy-alpha-D-glucopyranoside + AMP + diphosphate + H(+). Functionally, catalyzes the ATP-dependent condensation of GlcN-Ins and L-cysteine to form L-Cys-GlcN-Ins. The sequence is that of L-cysteine:1D-myo-inositol 2-amino-2-deoxy-alpha-D-glucopyranoside ligase from Paenarthrobacter aurescens (strain TC1).